The primary structure comprises 943 residues: Lactoferrin-binding protein A (943 aa).

The first 27 residues, 1–27 (MNKKHGFPLTLTALAIATAFPAYAAQA), serve as a signal peptide directing secretion. Residues 52–178 (RRSKEATGLG…LGGAVAFRTK (127 aa)) enclose the TBDR plug domain. The 755-residue stretch at 189–943 (SWGIQAKTAY…NFSLALEMKF (755 aa)) folds into the TBDR beta-barrel domain. Positions 926–943 (GRYAAPGRNFSLALEMKF) match the TonB C-terminal box motif.

It belongs to the TonB-dependent receptor family.

The protein resides in the cell outer membrane. In terms of biological role, unknown. May be an iron-siderophore receptor. The polypeptide is Lactoferrin-binding protein A (lbpA) (Neisseria meningitidis serogroup B (strain ATCC BAA-335 / MC58)).